Reading from the N-terminus, the 308-residue chain is uncharacterized protein (308 aa).

The active site involves glutamate 59.

It belongs to the PhzF family.

This is an uncharacterized protein from Deinococcus radiodurans (strain ATCC 13939 / DSM 20539 / JCM 16871 / CCUG 27074 / LMG 4051 / NBRC 15346 / NCIMB 9279 / VKM B-1422 / R1).